The chain runs to 181 residues: Ribonuclease HII (181 aa).

The region spanning 1–181 is the RNase H type-2 domain; that stretch reads MICGIDEVGR…NLHRRSFKFI (181 aa). A divalent metal cation contacts are provided by Asp6, Glu7, and Asp98.

Belongs to the RNase HII family. It depends on Mn(2+) as a cofactor. Mg(2+) serves as cofactor.

The protein localises to the cytoplasm. It catalyses the reaction Endonucleolytic cleavage to 5'-phosphomonoester.. Endonuclease that specifically degrades the RNA of RNA-DNA hybrids. The sequence is that of Ribonuclease HII from Borrelia hermsii (strain HS1 / DAH).